A 323-amino-acid chain; its full sequence is Acetyl-coenzyme A carboxylase carboxyl transferase subunit alpha (323 aa).

In terms of domain architecture, CoA carboxyltransferase C-terminal spans 39 to 293; sequence RLSKKSQQLT…RRALADSLRQ (255 aa).

This sequence belongs to the AccA family. Acetyl-CoA carboxylase is a heterohexamer composed of biotin carboxyl carrier protein (AccB), biotin carboxylase (AccC) and two subunits each of ACCase subunit alpha (AccA) and ACCase subunit beta (AccD).

The protein resides in the cytoplasm. The catalysed reaction is N(6)-carboxybiotinyl-L-lysyl-[protein] + acetyl-CoA = N(6)-biotinyl-L-lysyl-[protein] + malonyl-CoA. It functions in the pathway lipid metabolism; malonyl-CoA biosynthesis; malonyl-CoA from acetyl-CoA: step 1/1. Its function is as follows. Component of the acetyl coenzyme A carboxylase (ACC) complex. First, biotin carboxylase catalyzes the carboxylation of biotin on its carrier protein (BCCP) and then the CO(2) group is transferred by the carboxyltransferase to acetyl-CoA to form malonyl-CoA. This is Acetyl-coenzyme A carboxylase carboxyl transferase subunit alpha from Burkholderia orbicola (strain AU 1054).